The chain runs to 79 residues: D-alanyl carrier protein (79 aa).

The Carrier domain maps to 1 to 77 (MDVKETILNI…KIISGVVELM (77 aa)). Serine 35 is modified (O-(pantetheine 4'-phosphoryl)serine).

This sequence belongs to the DltC family. In terms of processing, 4'-phosphopantetheine is transferred from CoA to a specific serine of apo-DCP.

The protein resides in the cytoplasm. The protein operates within cell wall biogenesis; lipoteichoic acid biosynthesis. In terms of biological role, carrier protein involved in the D-alanylation of lipoteichoic acid (LTA). The loading of thioester-linked D-alanine onto DltC is catalyzed by D-alanine--D-alanyl carrier protein ligase DltA. The DltC-carried D-alanyl group is further transferred to cell membrane phosphatidylglycerol (PG) by forming an ester bond, probably catalyzed by DltD. D-alanylation of LTA plays an important role in modulating the properties of the cell wall in Gram-positive bacteria, influencing the net charge of the cell wall. This Streptococcus suis (strain 05ZYH33) protein is D-alanyl carrier protein.